A 290-amino-acid chain; its full sequence is Porphobilinogen deaminase (290 aa).

Cys-237 bears the S-(dipyrrolylmethanemethyl)cysteine mark.

The protein belongs to the HMBS family. As to quaternary structure, monomer. Dipyrromethane serves as cofactor.

It carries out the reaction 4 porphobilinogen + H2O = hydroxymethylbilane + 4 NH4(+). Its pathway is porphyrin-containing compound metabolism; protoporphyrin-IX biosynthesis; coproporphyrinogen-III from 5-aminolevulinate: step 2/4. Its function is as follows. Tetrapolymerization of the monopyrrole PBG into the hydroxymethylbilane pre-uroporphyrinogen in several discrete steps. This Clostridium botulinum (strain Kyoto / Type A2) protein is Porphobilinogen deaminase.